A 317-amino-acid polypeptide reads, in one-letter code: MARRRKGRPINGVILLDKPTGISSNDALQKVKRIYFAEKAGHTGALDPLATGMLPICLGEATKFSQFLLDSDKRYVVIAKLGERTNTSDSDGEVVETRDVNVTQEQLERCIASFKGETDQIPSMFSALKYQGKPLYEYARAGIEVPRESRKITVYSIELLRFEGDEVEMEVHCSKGTYIRTITDDLGEMLGCGAHVTMLRRTGVAKYPYDRMVTLEQLNEILEQAQAQEIAPKELLDPLLMPMDTAVEDLPEVNLNAELTDLVQHGMPVQVSGAPTEGTVRMTSGEEKLFVGVAQIAEDGRVAPKRLVVFRDEEPQA.

Aspartate 47 serves as the catalytic Nucleophile.

This sequence belongs to the pseudouridine synthase TruB family. Type 1 subfamily.

The enzyme catalyses uridine(55) in tRNA = pseudouridine(55) in tRNA. In terms of biological role, responsible for synthesis of pseudouridine from uracil-55 in the psi GC loop of transfer RNAs. This Vibrio atlanticus (strain LGP32) (Vibrio splendidus (strain Mel32)) protein is tRNA pseudouridine synthase B.